Here is a 123-residue protein sequence, read N- to C-terminus: Small ribosomal subunit protein uS13 (123 aa).

The tract at residues 99–123 (RGQRTRTNARTRKGPRRTVGVKRKK) is disordered.

Belongs to the universal ribosomal protein uS13 family. Part of the 30S ribosomal subunit. Forms a loose heterodimer with protein S19. Forms two bridges to the 50S subunit in the 70S ribosome.

Located at the top of the head of the 30S subunit, it contacts several helices of the 16S rRNA. In the 70S ribosome it contacts the 23S rRNA (bridge B1a) and protein L5 of the 50S subunit (bridge B1b), connecting the 2 subunits; these bridges are implicated in subunit movement. Contacts the tRNAs in the A and P-sites. The chain is Small ribosomal subunit protein uS13 from Carboxydothermus hydrogenoformans (strain ATCC BAA-161 / DSM 6008 / Z-2901).